Consider the following 538-residue polypeptide: Nectin-2 (538 aa).

Residues methionine 1–alanine 31 form the signal peptide. In terms of domain architecture, Ig-like V-type spans glutamine 32–leucine 156. Topologically, residues glutamine 32 to glycine 360 are extracellular. 3 cysteine pairs are disulfide-bonded: cysteine 54–cysteine 140, cysteine 183–cysteine 238, and cysteine 283–cysteine 329. A glycan (N-linked (GlcNAc...) asparagine) is linked at asparagine 137. Ig-like C2-type domains follow at residues proline 162–serine 256 and proline 261–phenylalanine 345. N-linked (GlcNAc...) asparagine glycosylation is present at asparagine 324. A helical transmembrane segment spans residues isoleucine 361–isoleucine 381. At cysteine 382–valine 538 the chain is on the cytoplasmic side. Residues threonine 390–lysine 414 are disordered. Phosphothreonine is present on threonine 410. 3 positions are modified to phosphoserine: serine 433, glycine 465, and glycine 470. Positions glutamate 462–aspartate 489 are disordered.

This sequence belongs to the nectin family. As to quaternary structure, can form trans-heterodimers with NECTIN3. Interacts with CD226 or with PVRIG; these interactions are competitive and have a differential functional outcome on T-cell activation, either positive or negative, respectively. Binds with low affinity to TIGIT. (Microbial infection) Interacts with herpes simplex virus 1 (HHV-1) mutant Rid1, herpes simplex virus 1 (HHV-2) and pseudorabies virus (PRV) envelope glycoprotein D. Ubiquitous.

The protein resides in the cell membrane. Functionally, modulator of T-cell signaling. Can be either a costimulator of T-cell function, or a coinhibitor, depending on the receptor it binds to. Upon binding to CD226, stimulates T-cell proliferation and cytokine production, including that of IL2, IL5, IL10, IL13, and IFNG. Upon interaction with PVRIG, inhibits T-cell proliferation. These interactions are competitive. Probable cell adhesion protein. (Microbial infection) Acts as a receptor for herpes simplex virus 1 (HHV-1) mutant Rid1, herpes simplex virus 1 (HHV-2) and pseudorabies virus (PRV). This is Nectin-2 from Homo sapiens (Human).